A 1068-amino-acid polypeptide reads, in one-letter code: Huntingtin-interacting protein 1-related protein (1068 aa).

N-acetylmethionine is present on Met1. Residues 23–151 (EREQFDKTQA…SFHLKHPQFP (129 aa)) enclose the ENTH domain. Residues 346–644 (GSMKDDRDLQ…LQDAVSKLDD (299 aa)) adopt a coiled-coil conformation. The disordered stretch occupies residues 582-610 (EALSQEQQRSSQEKGELRGQLAEKESQEQ). Residues 592–608 (SQEKGELRGQLAEKESQ) are compositionally biased toward basic and acidic residues. An I/LWEQ domain is found at 771 to 1012 (SLDVRQEELG…ELRKQHYVLA (242 aa)). Residues 867 to 924 (RWTEGLISASKAVGWGATQLVESADKVVLHMGKYEELIVCSHEIAASTAQLVAASKVK) form an important for actin binding region. Residues 1011 to 1068 (LAGGMGTPSEEEPSRPSPAPRSGATKKPPLAQKPSIAPRTDNQLDKKDGVYPAQLVNY) form a disordered region.

This sequence belongs to the SLA2 family. Homodimer. Interacts with actin; homodimerization promotes actin binding. Interacts with CLTB. Interacts with HIP1. Interacts (via ENTH and I/LWEQ domains) with BCL2L10. In terms of tissue distribution, widely expressed. Expressed at lower levels in skeletal muscle and heart. The level of expression does not change appreciably during development.

It localises to the cytoplasm. Its subcellular location is the perinuclear region. The protein resides in the endomembrane system. It is found in the cytoplasmic vesicle. The protein localises to the clathrin-coated vesicle membrane. Its function is as follows. Component of clathrin-coated pits and vesicles, that may link the endocytic machinery to the actin cytoskeleton. Binds 3-phosphoinositides (via ENTH domain). May act through the ENTH domain to promote cell survival by stabilizing receptor tyrosine kinases following ligand-induced endocytosis. This Mus musculus (Mouse) protein is Huntingtin-interacting protein 1-related protein (Hip1r).